The primary structure comprises 436 residues: Probable mediator of RNA polymerase II transcription subunit 26b (436 aa).

The segment at proline 71–aspartate 111 is disordered. One can recognise a TFIIS N-terminal domain in the interval lysine 139–tryptophan 214. A disordered region spans residues histidine 263–aspartate 376. 2 stretches are compositionally biased toward basic and acidic residues: residues asparagine 276 to proline 290 and threonine 332 to methionine 350. Residues glutamate 382–arginine 402 are a coiled coil. The interval glutamate 408 to lysine 436 is disordered. Polar residues predominate over residues serine 427–lysine 436.

The protein belongs to the Mediator complex subunit 26 family. As to quaternary structure, component of the Mediator complex.

The protein localises to the nucleus. In terms of biological role, component of the Mediator complex, a coactivator involved in the regulated transcription of nearly all RNA polymerase II-dependent genes. Mediator functions as a bridge to convey information from gene-specific regulatory proteins to the basal RNA polymerase II transcription machinery. The Mediator complex, having a compact conformation in its free form, is recruited to promoters by direct interactions with regulatory proteins and serves for the assembly of a functional preinitiation complex with RNA polymerase II and the general transcription factors. May play a role in transcription elongation. This is Probable mediator of RNA polymerase II transcription subunit 26b (MED26B) from Arabidopsis thaliana (Mouse-ear cress).